We begin with the raw amino-acid sequence, 175 residues long: Di-N-acetylchitobiase (175 aa).

An N-terminal signal peptide occupies residues 1 to 38 (MARLQLAGSRRLVPLPRRAPRLAPLLLPLLLALPDGAR). The GH18 domain occupies 39 to 175 (ADCPCKVPAL…SFHHEIKGSQ (137 aa)). Asparagine 115 carries an N-linked (GlcNAc...) asparagine glycan. The Proton donor role is filled by glutamate 143.

It belongs to the glycosyl hydrolase 18 family.

It localises to the lysosome. Its function is as follows. Involved in the degradation of asparagine-linked glycoproteins. Hydrolyze of N-acetyl-beta-D-glucosamine (1-4)N-acetylglucosamine chitobiose core from the reducing end of the bond, it requires prior cleavage by glycosylasparaginase. The polypeptide is Di-N-acetylchitobiase (CTBS) (Bos taurus (Bovine)).